We begin with the raw amino-acid sequence, 449 residues long: MRQRITELLVAKAEEQVVTVAGWIRTRRDTGDFSFLEVNDGSTLINMQVIADKSLGNYEEEVKKLSTGCSVMVEGVLKESPAKGQSVEVHASSVTVVGWADPETYPLQKKRHSLEFLREISHLRPRTNAISAVARVRSRLSYAVHNFFQEKGFTQVHTPIITTSDCEGAGEMFQVAATGKDGHFFGAPAGLTVSGQLQAEVYATALGDVYTFGPTFRAENSNTSRHLAEFWMIEPEMAFCDLQGDMEVAEEMLKYVLADVLEHCVTDMNLFDKFISKGIIERLQSVLAHDFARVTYTEAVDQLLASGQKFDFAVKWGIDLQSEHERYLTEQVYKRPLIVTDYPAAIKPFYMRMNEDGKTVAAMDILVPGIGELVGGSQREERYDLLAERMEAAGLDLEEYGWYLDLRKYGTVPHAGFGLGFERLVQFVTGMANIREVIPFPRTPGFAPC.

The protein belongs to the class-II aminoacyl-tRNA synthetase family. Homodimer.

The protein resides in the cytoplasm. It catalyses the reaction tRNA(Asn) + L-asparagine + ATP = L-asparaginyl-tRNA(Asn) + AMP + diphosphate + H(+). The sequence is that of Asparagine--tRNA ligase from Desulfotalea psychrophila (strain LSv54 / DSM 12343).